Consider the following 555-residue polypeptide: NAD-dependent protein deacetylase sirtuin-1 (555 aa).

Residues 39–46 carry the Nuclear localization signal motif; sequence PPKRKKRK. A Deacetylase sirtuin-type domain is found at 44–304; sequence KRKDINTIED…NELCHRLGGE (261 aa). K46 carries the post-translational modification N6-acetyllysine. Positions 64–67 are required for interaction with the sumoylated form of CCAR2; it reads IIVL. NAD(+) contacts are provided by residues 69–88 and 153–156; these read GAGV…DGIY and QNID. The active-site Proton acceptor is the H171. Positions 179 and 182 each coordinate Zn(2+). The residue at position 185 (K185) is an N6-acetyllysine. 2 residues coordinate Zn(2+): C203 and C206. S-nitrosocysteine occurs at positions 203 and 206. The residue at position 238 (K238) is an N6-acetyllysine. Positions 241-247 match the Nuclear export signal motif; sequence VDLLIVI. NAD(+) is bound by residues 248–250, 273–275, and C290; these read GSS and NRE. K321 is modified (N6-acetyllysine). The tract at residues 335 to 354 is disordered; it reads LPPTPLHISEDSSSPERTVP. A Phosphothreonine modification is found at T338. Position 343 is a phosphoserine (S343). Residues 345–354 show a composition bias toward polar residues; sequence DSSSPERTVP. T352 carries the post-translational modification Phosphothreonine. K417 is modified (N6-acetyllysine). Phosphoserine occurs at positions 466 and 468. Residues 469–529 form a disordered region; it reads EDDALSSSSC…GGSGADGGDQ (61 aa). Positions 473–493 are enriched in low complexity; it reads LSSSSCGSNSDSGTCQSPSLE. The span at 494-514 shows a compositional bias: acidic residues; it reads EPLEDESEIEEFYNGLEDDAD. Phosphoserine is present on S552.

Belongs to the sirtuin family. Class I subfamily. As to quaternary structure, interacts with XBP1 isoform 2. Found in a complex with PCAF and MYOD1. Interacts with FOXO1; the interaction deacetylates FOXO1, resulting in its nuclear retention and promotion of its transcriptional activity Component of the eNoSC complex, composed of SIRT1, SUV39H1 and RRP8. Interacts with HES1, HEY2 and PML. Interacts with RPS19BP1/AROS. Interacts with CCAR2 (via N-terminus); the interaction disrupts the interaction between SIRT1 and p53/TP53. Interacts with SETD7; the interaction induces the dissociation of SIRT1 from p53/TP53 and increases p53/TP53 activity. Interacts with MYCN, NR1I2, CREBZF, TSC2, TLE1, FOS, JUN, NR0B2, PPARG, NCOR, IRS1, IRS2 and NMNAT1. Interacts with HNF1A; the interaction occurs under nutrient restriction. Interacts with SUZ12; the interaction mediates the association with the PRC4 histone methylation complex which is specific as an association with PCR2 and PCR3 complex variants is not found. Interacts with HIV-1 tat. Interacts with BCL6; leads to a epigenetic repression of specific target genes. Interacts with CLOCK, BMAL1 and PER2. Interacts with PPARA; the interaction seems to be modulated by NAD(+) levels. Interacts with NR1H3 and this interaction is inhibited in the presence of CCAR2. Interacts with CHEK2. Interacts with p53/TP53. Exhibits a preferential interaction with sumoylated CCAR2 over its unmodified form. Interacts with PACS2. Interacts with SIRT7. Interacts with PUS7. Interacts with TULP3. Interacts with MORN3; the interaction enhances the ubiquitination of p53/TP53. Requires Zn(2+) as cofactor. Post-translationally, methylated on multiple lysine residues; methylation is enhanced after DNA damage and is dispensable for deacetylase activity toward p53/TP53. In terms of processing, phosphorylated. Phosphorylated by STK4/MST1, resulting in inhibition of SIRT1-mediated p53/TP53 deacetylation. Phosphorylation by MAPK8/JNK1 at Thr-338 leads to increased nuclear localization and enzymatic activity. Phosphorylation at Thr-338 by DYRK1A and DYRK3 activates deacetylase activity and promotes cell survival. Phosphorylated by CaMK2, leading to increased p53/TP53 and NF-kappa-B p65/RELA deacetylation activity. S-nitrosylated by GAPDH, leading to inhibit the NAD-dependent protein deacetylase activity. Post-translationally, acetylated at various Lys residues. Deacetylated via an autocatalytic mechanism. Autodeacetylation at Lys-46 promotes its protein deacetylase activity. In terms of processing, ubiquitinated; leading to degradation. Deubiquitinated by USP22; leading to stabilization.

It is found in the nucleus. The protein resides in the PML body. The protein localises to the cytoplasm. It carries out the reaction N(6)-acetyl-L-lysyl-[protein] + NAD(+) + H2O = 2''-O-acetyl-ADP-D-ribose + nicotinamide + L-lysyl-[protein]. The catalysed reaction is N(6)-propanoyl-L-lysyl-[protein] + NAD(+) + H2O = 3''-O-propanoyl-ADP-D-ribose + nicotinamide + L-lysyl-[protein]. It catalyses the reaction N(6)-(2E)-butenoyl-L-lysyl-[protein] + NAD(+) + H2O = 2''-O-(2E)-but-2-enoyl-ADP-D-ribose + nicotinamide + L-lysyl-[protein]. Its activity is regulated as follows. Inhibited by nicotinamide. Activated by resveratrol (3,5,4'-trihydroxy-trans-stilbene), butein (3,4,2',4'-tetrahydroxychalcone), piceatannol (3,5,3',4'-tetrahydroxy-trans-stilbene), Isoliquiritigenin (4,2',4'-trihydroxychalcone), fisetin (3,7,3',4'-tetrahydroxyflavone) and quercetin (3,5,7,3',4'-pentahydroxyflavone). MAPK8/JNK1 and RPS19BP1/AROS act as positive regulators of deacetylation activity. Negatively regulated by CCAR2. NAD-dependent protein deacetylase that links transcriptional regulation directly to intracellular energetics and participates in the coordination of several separated cellular functions such as cell cycle, response to DNA damage, metabolism, apoptosis and autophagy. Can modulate chromatin function through deacetylation of histones and can promote alterations in the methylation of histones and DNA, leading to transcriptional repression. Deacetylates a broad range of transcription factors and coregulators, thereby regulating target gene expression positively and negatively. Serves as a sensor of the cytosolic ratio of NAD(+)/NADH which is altered by glucose deprivation and metabolic changes associated with caloric restriction. Is essential in skeletal muscle cell differentiation and in response to low nutrients mediates the inhibitory effect on skeletal myoblast differentiation which also involves 5'-AMP-activated protein kinase (AMPK) and nicotinamide phosphoribosyltransferase (NAMPT). Component of the eNoSC (energy-dependent nucleolar silencing) complex, a complex that mediates silencing of rDNA in response to intracellular energy status and acts by recruiting histone-modifying enzymes. The eNoSC complex is able to sense the energy status of cell: upon glucose starvation, elevation of NAD(+)/NADP(+) ratio activates SIRT1, leading to histone H3 deacetylation followed by dimethylation of H3 at 'Lys-9' (H3K9me2) by SUV39H1 and the formation of silent chromatin in the rDNA locus. Deacetylates 'Lys-266' of SUV39H1, leading to its activation. Inhibits skeletal muscle differentiation by deacetylating PCAF and MYOD1. Deacetylates H2A and 'Lys-26' of H1-4. Deacetylates 'Lys-16' of histone H4 (in vitro). Involved in NR0B2/SHP corepression function through chromatin remodeling: Recruited to LRH1 target gene promoters by NR0B2/SHP thereby stimulating histone H3 and H4 deacetylation leading to transcriptional repression. Proposed to contribute to genomic integrity via positive regulation of telomere length; however, reports on localization to pericentromeric heterochromatin are conflicting. Proposed to play a role in constitutive heterochromatin (CH) formation and/or maintenance through regulation of the available pool of nuclear SUV39H1. Upon oxidative/metabolic stress decreases SUV39H1 degradation by inhibiting SUV39H1 polyubiquitination by MDM2. This increase in SUV39H1 levels enhances SUV39H1 turnover in CH, which in turn seems to accelerate renewal of the heterochromatin which correlates with greater genomic integrity during stress response. Deacetylates 'Lys-382' of p53/TP53 and impairs its ability to induce transcription-dependent proapoptotic program and modulate cell senescence. Deacetylates TAF1B and thereby represses rDNA transcription by the RNA polymerase I. Deacetylates MYC, promotes the association of MYC with MAX and decreases MYC stability leading to compromised transformational capability. Deacetylates FOXO3 in response to oxidative stress thereby increasing its ability to induce cell cycle arrest and resistance to oxidative stress but inhibiting FOXO3-mediated induction of apoptosis transcriptional activity; also leading to FOXO3 ubiquitination and protesomal degradation. Appears to have a similar effect on MLLT7/FOXO4 in regulation of transcriptional activity and apoptosis. Deacetylates DNMT1; thereby impairs DNMT1 methyltransferase-independent transcription repressor activity, modulates DNMT1 cell cycle regulatory function and DNMT1-mediated gene silencing. Deacetylates RELA/NF-kappa-B p65 thereby inhibiting its transactivating potential and augments apoptosis in response to TNF-alpha. Deacetylates HIF1A, KAT5/TIP60, RB1 and HIC1. Deacetylates FOXO1 resulting in its nuclear retention and enhancement of its transcriptional activity leading to increased gluconeogenesis in liver. Inhibits E2F1 transcriptional activity and apoptotic function, possibly by deacetylation. Involved in HES1- and HEY2-mediated transcriptional repression. In cooperation with MYCN seems to be involved in transcriptional repression of DUSP6/MAPK3 leading to MYCN stabilization by phosphorylation at 'Ser-62'. Deacetylates MEF2D. Required for antagonist-mediated transcription suppression of AR-dependent genes which may be linked to local deacetylation of histone H3. Represses HNF1A-mediated transcription. Required for the repression of ESRRG by CREBZF. Deacetylates NR1H3 AND NR1H2 and deacetylation of NR1H3 at 'Lys-434' positively regulates transcription of NR1H3:RXR target genes, promotes NR1H3 proteasomal degradation and results in cholesterol efflux; a promoter clearing mechanism after reach round of transcription is proposed. Involved in lipid metabolism: deacetylates LPIN1, thereby inhibiting diacylglycerol synthesis. Implicated in regulation of adipogenesis and fat mobilization in white adipocytes by repression of PPARG which probably involves association with NCOR1 and SMRT/NCOR2. Deacetylates p300/EP300 and PRMT1. Deacetylates ACSS2 leading to its activation, and HMGCS1 deacetylation. Involved in liver and muscle metabolism. Through deacetylation and activation of PPARGC1A is required to activate fatty acid oxidation in skeletal muscle under low-glucose conditions and is involved in glucose homeostasis. Involved in regulation of PPARA and fatty acid beta-oxidation in liver. Involved in positive regulation of insulin secretion in pancreatic beta cells in response to glucose; the function seems to imply transcriptional repression of UCP2. Proposed to deacetylate IRS2 thereby facilitating its insulin-induced tyrosine phosphorylation. Deacetylates SREBF1 isoform SREBP-1C thereby decreasing its stability and transactivation in lipogenic gene expression. Involved in DNA damage response by repressing genes which are involved in DNA repair, such as XPC and TP73, deacetylating XRCC6/Ku70, and facilitating recruitment of additional factors to sites of damaged DNA, such as SIRT1-deacetylated NBN can recruit ATM to initiate DNA repair and SIRT1-deacetylated XPA interacts with RPA2. Also involved in DNA repair of DNA double-strand breaks by homologous recombination and specifically single-strand annealing independently of XRCC6/Ku70 and NBN. Promotes DNA double-strand breaks by mediating deacetylation of SIRT6. Transcriptional suppression of XPC probably involves an E2F4:RBL2 suppressor complex and protein kinase B (AKT) signaling. Transcriptional suppression of TP73 probably involves E2F4 and PCAF. Deacetylates WRN thereby regulating its helicase and exonuclease activities and regulates WRN nuclear translocation in response to DNA damage. Deacetylates APEX1 at 'Lys-6' and 'Lys-7' and stimulates cellular AP endonuclease activity by promoting the association of APEX1 to XRCC1. Catalyzes deacetylation of ERCC4/XPF, thereby impairing interaction with ERCC1 and nucleotide excision repair (NER). Increases p53/TP53-mediated transcription-independent apoptosis by blocking nuclear translocation of cytoplasmic p53/TP53 and probably redirecting it to mitochondria. Deacetylates XRCC6/Ku70 at 'Lys-539' and 'Lys-542' causing it to sequester BAX away from mitochondria thereby inhibiting stress-induced apoptosis. Is involved in autophagy, presumably by deacetylating ATG5, ATG7 and MAP1LC3B/ATG8. Deacetylates AKT1 which leads to enhanced binding of AKT1 and PDK1 to PIP3 and promotes their activation. Proposed to play role in regulation of STK11/LBK1-dependent AMPK signaling pathways implicated in cellular senescence which seems to involve the regulation of the acetylation status of STK11/LBK1. Can deacetylate STK11/LBK1 and thereby increase its activity, cytoplasmic localization and association with STRAD; however, the relevance of such activity in normal cells is unclear. In endothelial cells is shown to inhibit STK11/LBK1 activity and to promote its degradation. Deacetylates SMAD7 at 'Lys-64' and 'Lys-70' thereby promoting its degradation. Deacetylates CIITA and augments its MHC class II transactivation and contributes to its stability. Deacetylates MECOM/EVI1. Deacetylates PML at 'Lys-487' and this deacetylation promotes PML control of PER2 nuclear localization. During the neurogenic transition, represses selective NOTCH1-target genes through histone deacetylation in a BCL6-dependent manner and leading to neuronal differentiation. Regulates the circadian expression of several core clock genes, including BMAL1, RORC, PER2 and CRY1 and plays a critical role in maintaining a controlled rhythmicity in histone acetylation, thereby contributing to circadian chromatin remodeling. Deacetylates BMAL1 and histones at the circadian gene promoters in order to facilitate repression by inhibitory components of the circadian oscillator. Deacetylates PER2, facilitating its ubiquitination and degradation by the proteasome. Protects cardiomyocytes against palmitate-induced apoptosis. Deacetylates XBP1 isoform 2; deacetylation decreases protein stability of XBP1 isoform 2 and inhibits its transcriptional activity. Deacetylates PCK1 and directs its activity toward phosphoenolpyruvate production promoting gluconeogenesis. Involved in the CCAR2-mediated regulation of PCK1 and NR1D1. Deacetylates CTNB1 at 'Lys-49'. In POMC (pro-opiomelanocortin) neurons, required for leptin-induced activation of PI3K signaling. In addition to protein deacetylase activity, also acts as a protein-lysine deacylase by mediating protein depropionylation and decrotonylation. Mediates depropionylation of Osterix (SP7). Catalyzes decrotonylation of histones; it however does not represent a major histone decrotonylase. Deacetylates SOX9; promoting SOX9 nuclear localization and transactivation activity. Involved in the regulation of centrosome duplication. Deacetylates CENATAC in G1 phase, allowing for SASS6 accumulation on the centrosome and subsequent procentriole assembly. Deacetylates NDC80/HEC1. In Rattus norvegicus (Rat), this protein is NAD-dependent protein deacetylase sirtuin-1.